The chain runs to 363 residues: Zinc phosphodiesterase ELAC protein 1 (363 aa).

Zn(2+)-binding residues include H62, H64, D66, H67, H182, D253, and H313. Residue D66 is the Proton acceptor of the active site.

This sequence belongs to the RNase Z family. In terms of assembly, homodimer. The cofactor is Zn(2+). As to expression, widely expressed. Expressed in heart, brain, placenta, lung, liver, skeletal muscle, kidney and pancreas.

The protein resides in the cytoplasm. It is found in the cytosol. It localises to the nucleus. The catalysed reaction is Endonucleolytic cleavage of RNA, removing extra 3' nucleotides from tRNA precursor, generating 3' termini of tRNAs. A 3'-hydroxy group is left at the tRNA terminus and a 5'-phosphoryl group is left at the trailer molecule.. In terms of biological role, zinc phosphodiesterase, which displays some tRNA 3'-processing endonuclease activity. Specifically involved in tRNA repair: acts downstream of the ribosome-associated quality control (RQC) pathway by removing a 2',3'-cyclic phosphate from tRNAs following cleavage by ANKZF1. tRNAs are then processed by TRNT1. The polypeptide is Zinc phosphodiesterase ELAC protein 1 (Homo sapiens (Human)).